Consider the following 1504-residue polypeptide: DNA polymerase zeta catalytic subunit (1504 aa).

Positions 1398, 1401, 1414, and 1417 each coordinate Zn(2+). The CysA-type zinc finger occupies 1398–1417; that stretch reads CCNCGEELTKICSLQLCDDC. Residues Cys1446, Cys1449, Cys1468, and Cys1473 each contribute to the [4Fe-4S] cluster site. The CysB motif signature appears at 1446 to 1473; the sequence is CRTCSYRYTSDAGIENDHIASKCNSYDC.

The protein belongs to the DNA polymerase type-B family. Forms DNA polymerase zeta with REV7. It depends on [4Fe-4S] cluster as a cofactor.

The protein resides in the mitochondrion. The protein localises to the nucleus. It catalyses the reaction DNA(n) + a 2'-deoxyribonucleoside 5'-triphosphate = DNA(n+1) + diphosphate. Functionally, nonessential DNA polymerase. Required for DNA damage induced mutagenesis. Involved in DNA repair, mitochondrial DNA repair and translesion synthesis. Translesion synthesis in S.cerevisiae may use a specialized DNA polymerase that is not required for other DNA replicative processes. Has a role in the bypass of abasic (AP) sites. Highly inefficient in incorporating nucleotides opposite the AP site, but efficiently extends from nucleotides, particularly an A, inserted opposite the lesion. The chain is DNA polymerase zeta catalytic subunit (REV3) from Saccharomyces cerevisiae (strain ATCC 204508 / S288c) (Baker's yeast).